Here is a 535-residue protein sequence, read N- to C-terminus: MGSSATEIEELENTTFKYLTGEQTEKMWQRLKGILRCLVKQLERGDVNVVDLKKNIEYAASVLEAVYIDETRRLLDTEDELSDIQTDSVPSEVRDWLASTFTRKMGMTKKKPEEKPKFRSIVHAVQAGIFVERMYRKTYHMVGLAYPAAVIVTLKDVDKWSFDVFALNEASGEHSLKFMIYELFTRYDLINRFKIPVSCLITFAEALEVGYSKYKNPYHNLIHAADVTQTVHYIMLHTGIMHWLTELEILAMVFAAAIHDYEHTGTTNNFHIQTRSDVAILYNDRSVLENHHVSAAYRLMQEEEMNILINLSKDDWRDLRNLVIEMVLSTDMSGHFQQIKNIRNSLQQPEGIDRAKTMSLILHAADISHPAKSWKLHYRWTMALMEEFFLQGDKEAELGLPFSPLCDRKSTMVAQSQIGFIDFIVEPTFSLLTDSTEKIVIPLIEEASKAETSSYVASSSTTIVGLHIADALRRSNTKGSMSDGSYSPDYSLAAVDLKSFKNNLVDIIQQNKERWKELAAQEARTSSQKCEFIHQ.

Calmodulin-binding stretches follow at residues 24 to 44 and 114 to 137; these read TEKMWQRLKGILRCLVKQLER and EKPKFRSIVHAVQAGIFVERMYRK. In terms of domain architecture, PDEase spans 142–522; it reads VGLAYPAAVI…ERWKELAAQE (381 aa). Catalysis depends on His-219, which acts as the Proton donor. Zn(2+) is bound by residues His-223, His-259, Asp-260, and Asp-366. Residue Asp-260 coordinates Mg(2+).

It belongs to the cyclic nucleotide phosphodiesterase family. PDE1 subfamily. In terms of assembly, homodimer. Interacts with YWHAZ. Zn(2+) is required as a cofactor. The cofactor is Mg(2+). Several tissues, including brain, kidney, testes and heart.

It catalyses the reaction a nucleoside 3',5'-cyclic phosphate + H2O = a nucleoside 5'-phosphate + H(+). It carries out the reaction 3',5'-cyclic GMP + H2O = GMP + H(+). The enzyme catalyses 3',5'-cyclic AMP + H2O = AMP + H(+). Type I PDE are activated by the binding of calmodulin in the presence of Ca(2+). Its function is as follows. Calcium/calmodulin-dependent cyclic nucleotide phosphodiesterase with a dual specificity for the second messengers cGMP and cAMP, which are key regulators of many important physiological processes. Has a higher efficiency with cGMP compared to cAMP. In Homo sapiens (Human), this protein is Dual specificity calcium/calmodulin-dependent 3',5'-cyclic nucleotide phosphodiesterase 1A.